The following is a 211-amino-acid chain: Ferric nitrobindin-like protein (211 aa).

The GXWXGXG signature appears at 21–27 (GRWRGPG). The tract at residues 104 to 130 (GVVQEGSDTRTEPGGAEPDPAGRRAPS) is disordered.

It belongs to the nitrobindin family.

This Beutenbergia cavernae (strain ATCC BAA-8 / DSM 12333 / CCUG 43141 / JCM 11478 / NBRC 16432 / NCIMB 13614 / HKI 0122) protein is Ferric nitrobindin-like protein.